The sequence spans 355 residues: 3-isopropylmalate dehydrogenase (355 aa).

Residues Arg-90, Arg-100, Arg-128, and Asp-222 each contribute to the substrate site. Mg(2+)-binding residues include Asp-222, Asp-246, and Asp-250. 280 to 292 (GSAPDIAGKGIAN) provides a ligand contact to NAD(+).

Belongs to the isocitrate and isopropylmalate dehydrogenases family. LeuB type 1 subfamily. As to quaternary structure, homodimer. The cofactor is Mg(2+). Requires Mn(2+) as cofactor.

It localises to the cytoplasm. The catalysed reaction is (2R,3S)-3-isopropylmalate + NAD(+) = 4-methyl-2-oxopentanoate + CO2 + NADH. It participates in amino-acid biosynthesis; L-leucine biosynthesis; L-leucine from 3-methyl-2-oxobutanoate: step 3/4. Its function is as follows. Catalyzes the oxidation of 3-carboxy-2-hydroxy-4-methylpentanoate (3-isopropylmalate) to 3-carboxy-4-methyl-2-oxopentanoate. The product decarboxylates to 4-methyl-2 oxopentanoate. The chain is 3-isopropylmalate dehydrogenase from Burkholderia multivorans (strain ATCC 17616 / 249).